We begin with the raw amino-acid sequence, 453 residues long: V-type proton ATPase subunit B (453 aa).

Arginine 341 is an ATP binding site.

Belongs to the ATPase alpha/beta chains family. V-ATPase is a heteromultimeric enzyme made up of two complexes: the ATP-hydrolytic V1 complex and the proton translocation V0 complex. The V1 complex consists of three catalytic AB heterodimers that form a heterohexamer, three peripheral stalks each consisting of EG heterodimers, one central rotor including subunits D and F, and the regulatory subunits C and H. The proton translocation complex V0 consists of the proton transport subunit a, a ring of proteolipid subunits c9c'', rotary subunit d, subunits e and f, and two accessory subunits.

Non-catalytic subunit of the V1 complex of vacuolar(H+)-ATPase (V-ATPase), a multisubunit enzyme composed of a peripheral complex (V1) that hydrolyzes ATP and a membrane integral complex (V0) that translocates protons. V-ATPase is responsible for acidifying and maintaining the pH of intracellular compartments and in some cell types, is targeted to the plasma membrane, where it is responsible for acidifying the extracellular environment. Essential for the proper assembly and activity of V-ATPase. The protein is V-type proton ATPase subunit B (ATP6V1B) of Gallus gallus (Chicken).